The primary structure comprises 1843 residues: Protein TIC 214 (1843 aa).

The next 6 membrane-spanning stretches (helical) occupy residues 18-38 (IINSVVVVGLYYGFLTTFSIG), 64-84 (FITGQLMMFISIYYAPLHLAL), 87-107 (PHTITVLVLPYLLFHFFWNNH), 124-144 (LSIQCVFLNNLIFQLFNHFIL), 172-192 (VGWLIGHILFMKWVGLVLFWI), and 217-237 (IFSILLFITCVYYLGRIPSPI). Disordered stretches follow at residues 244–281 (ETSKTEEREESEEETDVEIETTSETKGTKQEQEGAAEK), 557–576 (EEIENDEESKPDHGIRSRKA), 582–647 (FTDN…DEVA), 724–744 (NSEEEDTKEKEKKREEKRQEN), and 1527–1586 (SLEL…KKKK). Positions 251–264 (REESEEETDVEIET) are enriched in acidic residues. Basic and acidic residues predominate over residues 269 to 281 (KGTKQEQEGAAEK). Over residues 590-639 (NTPTSTTETTSTAETTSTTETTSTTKNTSTTKNTSTTETTSTTENENTSN) the composition is skewed to low complexity. 2 stretches are compositionally biased toward basic and acidic residues: residues 730–744 (TKEKEKKREEKRQEN) and 1527–1540 (SLELKNKEEKKKPA). The span at 1543–1562 (NIGSDTQKQGNPGSDPSTQQ) shows a compositional bias: polar residues. A compositionally biased stretch (basic and acidic residues) spans 1563–1580 (KDIKKNVKEDYDGRSDIQ).

It belongs to the TIC214 family. Part of the Tic complex.

The protein resides in the plastid. It is found in the chloroplast inner membrane. Functionally, involved in protein precursor import into chloroplasts. May be part of an intermediate translocation complex acting as a protein-conducting channel at the inner envelope. The polypeptide is Protein TIC 214 (Nandina domestica (Heavenly bamboo)).